The following is a 452-amino-acid chain: Bifunctional protein GlmU (452 aa).

The segment at 1 to 226 (MVAVAILAAG…SQEILGINDR (226 aa)) is pyrophosphorylase. Residues 7 to 10 (LAAG), K21, Q73, and 78 to 79 (GT) contribute to the UDP-N-acetyl-alpha-D-glucosamine site. Residue D103 participates in Mg(2+) binding. UDP-N-acetyl-alpha-D-glucosamine contacts are provided by G140, E155, N170, and N224. N224 lines the Mg(2+) pocket. Residues 227–247 (LQLADSFRILQERIRQQWMLA) are linker. The interval 248–452 (GVTLVDPTSI…ENWSTPTTEQ (205 aa)) is N-acetyltransferase. UDP-N-acetyl-alpha-D-glucosamine is bound by residues R329 and K347. Residue H359 is the Proton acceptor of the active site. Residues Y362 and N373 each contribute to the UDP-N-acetyl-alpha-D-glucosamine site. Residues A376, 382 to 383 (NY), A419, and R436 contribute to the acetyl-CoA site.

The protein in the N-terminal section; belongs to the N-acetylglucosamine-1-phosphate uridyltransferase family. In the C-terminal section; belongs to the transferase hexapeptide repeat family. Homotrimer. The cofactor is Mg(2+).

It is found in the cytoplasm. The enzyme catalyses alpha-D-glucosamine 1-phosphate + acetyl-CoA = N-acetyl-alpha-D-glucosamine 1-phosphate + CoA + H(+). It catalyses the reaction N-acetyl-alpha-D-glucosamine 1-phosphate + UTP + H(+) = UDP-N-acetyl-alpha-D-glucosamine + diphosphate. Its pathway is nucleotide-sugar biosynthesis; UDP-N-acetyl-alpha-D-glucosamine biosynthesis; N-acetyl-alpha-D-glucosamine 1-phosphate from alpha-D-glucosamine 6-phosphate (route II): step 2/2. The protein operates within nucleotide-sugar biosynthesis; UDP-N-acetyl-alpha-D-glucosamine biosynthesis; UDP-N-acetyl-alpha-D-glucosamine from N-acetyl-alpha-D-glucosamine 1-phosphate: step 1/1. It functions in the pathway bacterial outer membrane biogenesis; LPS lipid A biosynthesis. In terms of biological role, catalyzes the last two sequential reactions in the de novo biosynthetic pathway for UDP-N-acetylglucosamine (UDP-GlcNAc). The C-terminal domain catalyzes the transfer of acetyl group from acetyl coenzyme A to glucosamine-1-phosphate (GlcN-1-P) to produce N-acetylglucosamine-1-phosphate (GlcNAc-1-P), which is converted into UDP-GlcNAc by the transfer of uridine 5-monophosphate (from uridine 5-triphosphate), a reaction catalyzed by the N-terminal domain. The sequence is that of Bifunctional protein GlmU from Synechococcus sp. (strain ATCC 27144 / PCC 6301 / SAUG 1402/1) (Anacystis nidulans).